Consider the following 197-residue polypeptide: Nascent polypeptide-associated complex subunit alpha (197 aa).

A compositionally biased stretch (basic and acidic residues) spans 1-18 (MTGSTETRHNEKDVKEPQ). The tract at residues 1-30 (MTGSTETRHNEKDVKEPQVDSDADSDNEAI) is disordered. Over residues 19 to 28 (VDSDADSDNE) the composition is skewed to acidic residues. In terms of domain architecture, NAC-A/B spans 58 to 123 (SRSEKKARKL…AKIEDLTQHA (66 aa)). Residues 134–155 (TREAPQLKTVEEDDNEDVEEDS) form a disordered region. Residues 144 to 155 (EEDDNEDVEEDS) are compositionally biased toward acidic residues. One can recognise a UBA domain in the interval 158-195 (IEEKDIELVISQANTTRNKAIRALKDADNDIVNAIMSL).

This sequence belongs to the NAC-alpha family.

Functionally, may promote appropriate targeting of ribosome-nascent polypeptide complexes. This chain is Nascent polypeptide-associated complex subunit alpha, found in Caenorhabditis briggsae.